The primary structure comprises 199 residues: 7-methyl-GTP pyrophosphatase (199 aa).

Aspartate 76 functions as the Proton acceptor in the catalytic mechanism.

Belongs to the Maf family. YceF subfamily. The cofactor is a divalent metal cation.

It is found in the cytoplasm. It carries out the reaction N(7)-methyl-GTP + H2O = N(7)-methyl-GMP + diphosphate + H(+). In terms of biological role, nucleoside triphosphate pyrophosphatase that hydrolyzes 7-methyl-GTP (m(7)GTP). May have a dual role in cell division arrest and in preventing the incorporation of modified nucleotides into cellular nucleic acids. The polypeptide is 7-methyl-GTP pyrophosphatase (Nitrosococcus oceani (strain ATCC 19707 / BCRC 17464 / JCM 30415 / NCIMB 11848 / C-107)).